We begin with the raw amino-acid sequence, 1435 residues long: Dicer-like protein 2 (1435 aa).

The Helicase ATP-binding domain maps to 54–234 (MLSESLRQNI…LEVLEINLNA (181 aa)). ATP is bound at residue 67–74 (MDTGSGKT). Positions 175–178 (DEAH) match the DEAH box motif. In terms of domain architecture, Helicase C-terminal spans 400 to 564 (KLIDFLVLEH…ENKRALEHIQ (165 aa)). A Dicer dsRNA-binding fold domain is found at 591 to 684 (ARNHLSHFCG…MPAHHHIDDE (94 aa)). RNase III domains follow at residues 956–1099 (ANEL…IDGG) and 1141–1323 (LSEI…IDSQ). Residues Glu-1178, Asp-1309, and Glu-1312 each coordinate Mg(2+).

It belongs to the helicase family. Dicer subfamily. Mg(2+) is required as a cofactor. Requires Mn(2+) as cofactor.

Dicer-like endonuclease involved in cleaving double-stranded RNA in the RNA interference (RNAi) pathway. Produces 21 to 25 bp dsRNAs (siRNAs) which target the selective destruction of homologous RNAs leading to sequence-specific suppression of gene expression, called post-transcriptional gene silencing (PTGS). Part of a broad host defense response against viral infection and transposons. This is Dicer-like protein 2 (DCL2) from Coccidioides immitis (strain RS) (Valley fever fungus).